Consider the following 276-residue polypeptide: Microtubule-associated protein RP/EB family member 1A (276 aa).

The Calponin-homology (CH) domain occupies 13–115 (FVGRNEILTW…FLQWLKRFCD (103 aa)). A disordered region spans residues 124–172 (ENYNPVERRSRNGKERSVKGSNKIPKSLQTNNNHPPPNSSSVGLSKASG). Residues 129 to 141 (VERRSRNGKERSV) are compositionally biased toward basic and acidic residues. Residues 162 to 172 (SSSVGLSKASG) show a composition bias toward low complexity. Residues 173–243 (PKSAKAAEVQ…LYATDANESA (71 aa)) form the EB1 C-terminal domain. Positions 252–276 (NQSLGVEDDEAEGNGEQLEEEKTQA) are disordered. Over residues 257–270 (VEDDEAEGNGEQLE) the composition is skewed to acidic residues.

The protein belongs to the MAPRE family. In terms of assembly, homodimer and heterodimer with EB1B. Interacts with tobamovirus movement protein. In terms of tissue distribution, highly expressed in guard cells of leaf stomata, pollen grains and pollen tubes. Expressed in young roots.

It localises to the cytoplasm. It is found in the cytoskeleton. The protein localises to the spindle pole. Its subcellular location is the phragmoplast. Functionally, binds to the plus end of microtubules and regulates the dynamics of the microtubule cytoskeleton. May be involved in anchoring microtubules to their nucleation sites and/or functioning as a reservoir for distribution to the growing end. In plants, microtubule minus ends are not necessarily severed from the nucleation site and transported to the plus end of a microtubule as part of the recycling process. May play a role in endomembrane organization during polarized growth of plant cells. Interacts with the tobamovirus movement protein (MP) and may play a role in the association of MP with the microtubule system during infection. This Arabidopsis thaliana (Mouse-ear cress) protein is Microtubule-associated protein RP/EB family member 1A (EB1A).